A 222-amino-acid chain; its full sequence is Small ribosomal subunit protein uS5 (222 aa).

The interval 1-41 is disordered; it reads MAEQAGAGSAQDNRGGGRDDRGGRGRRDDRGGRGGRDDREK. The segment covering 15 to 41 has biased composition (basic and acidic residues); it reads GGGRDDRGGRGRRDDRGGRGGRDDREK. The S5 DRBM domain maps to 44–107; the sequence is YLERVVTINR…EEARKNFFRV (64 aa).

This sequence belongs to the universal ribosomal protein uS5 family. In terms of assembly, part of the 30S ribosomal subunit. Contacts proteins S4 and S8.

With S4 and S12 plays an important role in translational accuracy. Functionally, located at the back of the 30S subunit body where it stabilizes the conformation of the head with respect to the body. This Mycolicibacterium gilvum (strain PYR-GCK) (Mycobacterium gilvum (strain PYR-GCK)) protein is Small ribosomal subunit protein uS5.